Here is a 361-residue protein sequence, read N- to C-terminus: MISANSLLISTLCAFAIATPLSKRDSCTLTGSSLSSLSTVKKCSSIVIKDLTVPAGQTLDLTGLSSGTTVTFEGTTTFQYKEWSGPLISISGSKISVVGASGHTIDGQGAKWWDGLGDSGKVKPKFVKLALTGTSKVTGLNIKNAPHQVFSINKCSDLTISDITIDIRDGDSAGGHNTDGFDVGSSSNVLIQGCTVYNQDDCIAVNSGSTIKFMNNYCYNGHGISVGSVGGRSDNTVNGFWAENNHVINSDNGLRIKTVEGATGTVTNVNFISNKISGIKSYGIVIEGDYLNSKTTGTATGGVPISNLVMKDITGSVNSTAKRVKILVKNATNWQWSGVSITGGSSYSGCSGIPSGSGASC.

The signal sequence occupies residues 1–18 (MISANSLLISTLCAFAIA). Residues C27 and C43 are joined by a disulfide bond. PbH1 repeat units follow at residues 155–185 (CSDL…DVGS), 186–207 (SSNV…AVNS), 208–228 (GSTI…SVGS), 237–258 (VNGF…RIKT), and 266–288 (VTNV…VIEG). D200 serves as the catalytic Proton donor. C202 and C218 are disulfide-bonded. Residue H222 is part of the active site. N-linked (GlcNAc...) asparagine glycosylation is found at N318 and N330. C350 and C361 are disulfide-bonded.

Belongs to the glycosyl hydrolase 28 family.

It carries out the reaction (1,4-alpha-D-galacturonosyl)n+m + H2O = (1,4-alpha-D-galacturonosyl)n + (1,4-alpha-D-galacturonosyl)m.. This chain is Polygalacturonase (PGU1), found in Saccharomyces cerevisiae (strain ATCC 204508 / S288c) (Baker's yeast).